Reading from the N-terminus, the 397-residue chain is Nicotinate phosphoribosyltransferase (397 aa).

Position 221 is a phosphohistidine; by autocatalysis (histidine 221).

This sequence belongs to the NAPRTase family. In terms of processing, transiently phosphorylated on a His residue during the reaction cycle. Phosphorylation strongly increases the affinity for substrates and increases the rate of nicotinate D-ribonucleotide production. Dephosphorylation regenerates the low-affinity form of the enzyme, leading to product release.

The catalysed reaction is nicotinate + 5-phospho-alpha-D-ribose 1-diphosphate + ATP + H2O = nicotinate beta-D-ribonucleotide + ADP + phosphate + diphosphate. It functions in the pathway cofactor biosynthesis; NAD(+) biosynthesis; nicotinate D-ribonucleotide from nicotinate: step 1/1. Functionally, catalyzes the synthesis of beta-nicotinate D-ribonucleotide from nicotinate and 5-phospho-D-ribose 1-phosphate at the expense of ATP. The sequence is that of Nicotinate phosphoribosyltransferase from Herminiimonas arsenicoxydans.